We begin with the raw amino-acid sequence, 256 residues long: uncharacterized protein (256 aa).

Residues 1–24 (MIKRVNKLVLGISLLFLVISIAAG) form the signal peptide. Cys-25 carries N-palmitoyl cysteine lipidation. Cys-25 carries the S-diacylglycerol cysteine lipid modification.

Belongs to the staphylococcal tandem lipoprotein family.

The protein localises to the cell membrane. This is an uncharacterized protein from Staphylococcus aureus.